Reading from the N-terminus, the 309-residue chain is MAQQEVVEGFKFEQRHGKERVRVARVWKTRQGQHFVVEWRVGITLFSDCVNSYLRDDNSDIVATDTMKNTVYAKAKECSDILSAEDFAILLAKHFVSFYKKVTGAIVNIVEKPWERVIVDGQPHEHGFKLGSEKHTTEAIVQKSGSLQLTSGIEGLSVLKTTQSGFVNFIRDKYTALPDTRERILATEVTALWRYSYESQYSLPQKPLYFTEKYQEVKKVLADTFFGPPNGGVYSPSVQNTLYLMAKATLNRFPDIAYVSLKMPNLHFLPVNISNKDGPIVKFEDDVYLPTDEPHGSIQASLSRLWSKL.

Catalysis depends on charge relay system residues Lys-18 and Thr-64. Urate contacts are provided by Thr-64, Asp-65, Phe-166, Arg-183, Val-238, Gln-239, and Asn-265. His-267 acts as the Charge relay system in catalysis.

This sequence belongs to the uricase family. In terms of assembly, homotetramer.

It localises to the peroxisome. It catalyses the reaction urate + O2 + H2O = 5-hydroxyisourate + H2O2. The protein operates within purine metabolism; urate degradation; (S)-allantoin from urate: step 1/3. Catalyzes the oxidation of uric acid to 5-hydroxyisourate, which is further processed to form (S)-allantoin. This chain is Uricase-2 isozyme 2, found in Glycine max (Soybean).